A 1312-amino-acid chain; its full sequence is DNA repair protein RAD50 (1312 aa).

Arginine 13, asparagine 36, glycine 37, glycine 39, lysine 40, threonine 41, threonine 42, isoleucine 65, aspartate 67, and glutamine 158 together coordinate ATP. Position 41 (threonine 41) interacts with Mg(2+). Residue glutamine 158 coordinates Mg(2+). Coiled coils occupy residues 185 to 347 and 403 to 558; these read TKAL…LIRR and QDLT…LQND. Residue serine 469 is modified to Phosphoserine. Threonine 568 bears the Phosphothreonine mark. The stretch at 640–678 forms a coiled coil; it reads DCTIDEYNDVLEETELSYKTALENLKMHQTTLEFNRKAL. The region spanning 640 to 741 is the Zinc-hook domain; it reads DCTIDEYNDV…SLRLLEKHII (102 aa). Zn(2+) contacts are provided by cysteine 687 and cysteine 690. Coiled-coil stretches lie at residues 712–741 and 787–1108; these read DANFEKTLKDTVQNEKEYLHSLRLLEKHII and LAES…DIEK.

Belongs to the SMC family. RAD50 subfamily. In terms of assembly, component of the MRN complex composed of two heterodimers RAD50 and MRE11 associated with a single XRS2. The MRN complexes dimerize on DNA to form joined MRN-MRN oligomers required for DNA double-strand break repair. Requires Zn(2+) as cofactor.

It is found in the nucleus. It localises to the chromosome. The catalysed reaction is ATP + H2O = ADP + phosphate + H(+). Its function is as follows. Component of the MRN complex, which plays a central role in double-strand break (DSB) repair, DNA recombination, maintenance of telomere integrity and meiosis. The MRN complex is involved in the repair of DNA double-strand breaks (DSBs) via homologous recombination (HR), an error-free mechanism which primarily occurs during S and G2 phases. The complex (1) mediates the end resection of damaged DNA, which generates proper single-stranded DNA, a key initial steps in HR, and is (2) required for the recruitment of other repair factors and efficient activation of TEL1/ATM and ATR upon DNA damage. The MRN complex possesses single-strand endonuclease activity and double-strand-specific 3'-5' exonuclease activity, which are provided by MRE11, to initiate end resection, which is required for single-strand invasion and recombination. Within the complex, RAD50 is both required to bind DNA ends and hold them in close proximity and regulate the activity of MRE11. RAD50 provides an ATP-dependent control of MRE11 by positioning DNA ends into the MRE11 active site: ATP-binding induces a large structural change from an open form with accessible MRE11 nuclease sites into a closed form. The MRN complex is also required for the processing of R-loops. This Saccharomyces cerevisiae (strain ATCC 204508 / S288c) (Baker's yeast) protein is DNA repair protein RAD50.